We begin with the raw amino-acid sequence, 752 residues long: MAAPVVGDADLQSVRRIRLDVLGMSCAACASRVETKLNKIPGVRASVNFATRVATIDAVGMAADELCGVVEKAGYHAAPHTETTVLDKRTKDPDGAHARRLLRRLLVAAVLFVPLADLSTLFAIVPSARVPGWGYILTALAAPVVTWAAWPFHSVALRNARHRTTSMETLISVGIVAATAWSLSSVFGDQPPREGSGIWRAILNSDSIYLEVAAGVTVFVLAGRYFEARAKSKAGSALRALAELGAKNVAVLLPDGAELVIPASELKKRQRFVTRPGETIAADGVVVDGSAAIDMSAMTGEAKPVRAYPAASVVGGTVVMDGRLVIEATAVGADTQFAAMVRLVEQAQTQKARAQRLADHIAGVFVPVVFVIAGLAGAAWLVSGAGADRAFSVTLGVLVIACPCALGLATPTAMMVASGRGAQLGIFIKGYRALETIRSIDTVVFDKTGTLTVGQLAVSTVTMAGSGTSERDREEVLGLAAAVESASEHAMAAAIVAASPDPGPVNGFVAVAGCGVSGEVGGHHVEVGKPSWITRTTPCHDAALVSARLDGESRGETVVFVSVDGVVRAALTIADTLKDSAAAAVAALRSRGLRTILLTGDNRAAADAVAAQVGIDSAVADMLPEGKVDVIQRLREEGHTVAMVGDGINDGPALVGADLGLAIGRGTDVALGAADIILVRDDLNTVPQALDLARATMRTIRMNMIWAFGYNVAAIPIAAAGLLNPLIAGAAMAFSSFFVVSNSLRLRNFGAQ.

Residues 15 to 78 (RRIRLDVLGM…VVEKAGYHAA (64 aa)) form the HMA domain. A metal cation is bound by residues Cys26 and Cys29. Transmembrane regions (helical) follow at residues 105 to 125 (LLVA…FAIV), 132 to 152 (GWGY…AWPF), 167 to 187 (METL…SSVF), 201 to 221 (AILN…VFVL), 361 to 381 (IAGV…AAWL), and 390 to 410 (AFSV…GLAT). Catalysis depends on Asp446, which acts as the 4-aspartylphosphate intermediate. Transmembrane regions (helical) follow at residues 491–511 (MAAA…FVAV) and 714–734 (AIPI…AMAF).

This sequence belongs to the cation transport ATPase (P-type) (TC 3.A.3) family. Type IB subfamily.

Its subcellular location is the cell membrane. The enzyme catalyses ATP + H2O = ADP + phosphate + H(+). This Mycobacterium tuberculosis (strain ATCC 25618 / H37Rv) protein is Cation-transporting P-type ATPase B (ctpB).